Here is a 358-residue protein sequence, read N- to C-terminus: Transcription factor bHLH67 (358 aa).

Residues asparagine 125–glutamine 176 are disordered. Low complexity predominate over residues threonine 127–serine 137. A compositionally biased stretch (basic residues) spans glutamate 157 to proline 166. One can recognise a bHLH domain in the interval asparagine 175–leucine 226.

In terms of assembly, homodimer. Expressed constitutively in roots, leaves, stems, and flowers.

It is found in the nucleus. This is Transcription factor bHLH67 (BHLH67) from Arabidopsis thaliana (Mouse-ear cress).